The chain runs to 274 residues: 3-methyl-2-oxobutanoate hydroxymethyltransferase (274 aa).

2 residues coordinate Mg(2+): Asp-46 and Asp-85. 3-methyl-2-oxobutanoate-binding positions include 46 to 47 (DS), Asp-85, and Lys-114. Glu-116 lines the Mg(2+) pocket. Catalysis depends on Glu-183, which acts as the Proton acceptor.

Belongs to the PanB family. In terms of assembly, homodecamer; pentamer of dimers. The cofactor is Mg(2+).

It localises to the cytoplasm. It carries out the reaction 3-methyl-2-oxobutanoate + (6R)-5,10-methylene-5,6,7,8-tetrahydrofolate + H2O = 2-dehydropantoate + (6S)-5,6,7,8-tetrahydrofolate. It participates in cofactor biosynthesis; coenzyme A biosynthesis. In terms of biological role, catalyzes the reversible reaction in which hydroxymethyl group from 5,10-methylenetetrahydrofolate is transferred onto alpha-ketoisovalerate to form ketopantoate. The chain is 3-methyl-2-oxobutanoate hydroxymethyltransferase from Aeropyrum pernix (strain ATCC 700893 / DSM 11879 / JCM 9820 / NBRC 100138 / K1).